The sequence spans 297 residues: uncharacterized protein (297 aa).

Glu-46 is a catalytic residue.

This sequence belongs to the PhzF family. In terms of assembly, homodimer and homotetramer.

This is an uncharacterized protein from Escherichia coli O157:H7.